We begin with the raw amino-acid sequence, 396 residues long: Mitogen-activated protein kinase mpkC (396 aa).

In terms of domain architecture, Protein kinase spans 20–299; that stretch reads YSDLQPVGLG…AAKALEHPYL (280 aa). ATP is bound by residues 26-34 and lysine 49; that span reads VGLGAFGLV. Aspartate 141 acts as the Proton acceptor in catalysis. Residue threonine 171 is modified to Phosphothreonine. The TXY motif lies at 171–173; it reads TGY. A Phosphotyrosine modification is found at tyrosine 173.

Belongs to the protein kinase superfamily. Ser/Thr protein kinase family. MAP kinase subfamily. HOG1 sub-subfamily. Mg(2+) serves as cofactor. Dually phosphorylated on Thr-171 and Tyr-173, which activates the enzyme.

It carries out the reaction L-seryl-[protein] + ATP = O-phospho-L-seryl-[protein] + ADP + H(+). The enzyme catalyses L-threonyl-[protein] + ATP = O-phospho-L-threonyl-[protein] + ADP + H(+). With respect to regulation, activated by tyrosine and threonine phosphorylation. Its function is as follows. Mitogen-activated protein kinase required for growth on media where sorbitol or mannitol is the sole carbon source. This Aspergillus niger (strain ATCC MYA-4892 / CBS 513.88 / FGSC A1513) protein is Mitogen-activated protein kinase mpkC (mpkC).